Consider the following 337-residue polypeptide: MTYAVEFDNVSRLYGDVRAVDGVSIAIKDGEFFSMLGPSGSGKTTCLRLIAGFEQLSGGAISIFGKPASNLPPWERDVNTVFQDYALFPHMSILDNVAYGLMVKGVNKKQRHAMAQEALEKVALGFVHQRKPSQLSGGQRQRVAIARALVNEPRVLLLDEPLGALDLKLREQMQLELKKLQQSLGITFIFVTHDQGEALSMSDRVAVFNNGRIEQVDSPRDLYMRPRTPFVAGFVGTSNVFDGLMAEKLCGMTGSFALRPEHIRLNTPGELQANGTIQAVQYQGAATRFELKLNGGEKLLVSQANMTGEELPATLTPGQQVMVSWSRDVMVPLVEER.

The region spanning 5–235 (VEFDNVSRLY…PRTPFVAGFV (231 aa)) is the ABC transporter domain. Residue 37-44 (GPSGSGKT) coordinates ATP.

The protein belongs to the ABC transporter superfamily.

Its function is as follows. Probably part of the ABC transporter complex YdcSTUV. Probably responsible for energy coupling to the transport system. This is an uncharacterized protein from Escherichia coli (strain K12).